A 216-amino-acid chain; its full sequence is MKPSFLHIPAAALLLCSLWILPIYCCNKALCASDVSKCLIQELCQCRPTDGNCSCCKECMLCLGTLWDECCDCVGMCKPRNYSDTPPTSKSTVEELHEPIPSLFRALTEGDTQLNWNIVTFPVVEELSHHENLVSFLENVNQPQNVSVQVSHSNEKEHMCTVVYFDDCMSIHQCKVSCESMGASKYRWFHNACCECVGPECIDYGSKTVKCVNCMV.

Positions 1-25 (MKPSFLHIPAAALLLCSLWILPIYC) are cleaved as a signal peptide. Asn-52, Asn-81, and Asn-145 each carry an N-linked (GlcNAc...) asparagine glycan.

The protein belongs to the twisted gastrulation protein family. As to quaternary structure, binds directly to bmp2, bmp4 and bmp7 and can form a ternary complex with bmps and chordin, thus preventing the binding of bmps to their cell surface receptors. Posterior defects are induced by overexpression. This may arise through alteration of bmp4 or chrd function in the developing tailbud region.

Its subcellular location is the secreted. Involved in dorsal-ventral patterning, permitting peak BMP signaling by antagonizing the residual anti-BMP activity of the cleavage products of chrd. Functions to promote the formation of ventral mesoderm by increasing the activity of bmp7 and other BMPS. Seems to antagonize BMP signaling by forming ternary complexes with chrd and BMPs, thereby preventing BMPs from binding to their receptors. In addition to the anti-BMP function, also has pro-BMP activity, partly mediated by cleavage and degradation of chrd, which releases BMPs from ternary complexes. May be an important modulator of BMP-regulated cartilage development and chondrocyte differentiation. The chain is Twisted gastrulation protein homolog 1-A (twsg1-a) from Xenopus laevis (African clawed frog).